The chain runs to 453 residues: GTPase Der (453 aa).

2 consecutive EngA-type G domains span residues 4-169 (PIVA…SETP) and 177-352 (IKVA…RQFE). GTP is bound by residues 10-17 (GRPNVGKS), 57-61 (DTGGL), 120-123 (NKCE), 183-190 (GRPNVGKS), 230-234 (DTAGI), and 295-298 (NKWD). In terms of domain architecture, KH-like spans 353-438 (QRVTTSVINE…PIRLLWRGKK (86 aa)).

The protein belongs to the TRAFAC class TrmE-Era-EngA-EngB-Septin-like GTPase superfamily. EngA (Der) GTPase family. Associates with the 50S ribosomal subunit.

Functionally, GTPase that plays an essential role in the late steps of ribosome biogenesis. This chain is GTPase Der, found in Acaryochloris marina (strain MBIC 11017).